Consider the following 433-residue polypeptide: T-box transcription factor T (433 aa).

The T-box DNA-binding region spans 49 to 217; sequence LWLRFKELTN…YNPFAKAFLD (169 aa).

In terms of assembly, monomer. Binds DNA as a monomer.

It localises to the nucleus. In terms of biological role, involved in the transcriptional regulation of genes required for mesoderm formation and differentiation. Binds to a palindromic site (called T site) and activates gene transcription when bound to such a site. This is T-box transcription factor T from Gallus gallus (Chicken).